The sequence spans 187 residues: NADH-quinone oxidoreductase subunit B (187 aa).

[4Fe-4S] cluster is bound by residues cysteine 51, cysteine 52, cysteine 117, and cysteine 149.

It belongs to the complex I 20 kDa subunit family. As to quaternary structure, NDH-1 is composed of 14 different subunits. Subunits NuoB, C, D, E, F, and G constitute the peripheral sector of the complex. It depends on [4Fe-4S] cluster as a cofactor.

Its subcellular location is the cell inner membrane. The enzyme catalyses a quinone + NADH + 5 H(+)(in) = a quinol + NAD(+) + 4 H(+)(out). In terms of biological role, NDH-1 shuttles electrons from NADH, via FMN and iron-sulfur (Fe-S) centers, to quinones in the respiratory chain. The immediate electron acceptor for the enzyme in this species is believed to be ubiquinone. Couples the redox reaction to proton translocation (for every two electrons transferred, four hydrogen ions are translocated across the cytoplasmic membrane), and thus conserves the redox energy in a proton gradient. This chain is NADH-quinone oxidoreductase subunit B, found in Nitratidesulfovibrio vulgaris (strain DSM 19637 / Miyazaki F) (Desulfovibrio vulgaris).